Here is a 177-residue protein sequence, read N- to C-terminus: UPF0102 protein BPP4042 (177 aa).

The interval 13–43 (AAQAQRRLHRRPPASPRASPGARDGGSPTQR) is disordered.

The protein belongs to the UPF0102 family.

The sequence is that of UPF0102 protein BPP4042 from Bordetella parapertussis (strain 12822 / ATCC BAA-587 / NCTC 13253).